Here is a 467-residue protein sequence, read N- to C-terminus: Cytochrome P450 85A3 (467 aa).

A helical membrane pass occupies residues 2–22; the sequence is AIFLIIFVVFFGFCILSTPLF. Cys-417 contacts heme.

The protein belongs to the cytochrome P450 family. Heme is required as a cofactor. In terms of tissue distribution, expressed in fruits.

The protein resides in the membrane. It carries out the reaction 6-deoxocastasterone + reduced [NADPH--hemoprotein reductase] + O2 = 6alpha-hydroxycastasterone + oxidized [NADPH--hemoprotein reductase] + H2O + H(+). The enzyme catalyses 6alpha-hydroxycastasterone + reduced [NADPH--hemoprotein reductase] + O2 = castasterone + oxidized [NADPH--hemoprotein reductase] + 2 H2O + H(+). It catalyses the reaction castasterone + reduced [NADPH--hemoprotein reductase] + O2 = brassinolide + oxidized [NADPH--hemoprotein reductase] + H2O + H(+). The catalysed reaction is 6-deoxocastasterone + 2 reduced [NADPH--hemoprotein reductase] + 2 O2 = castasterone + 2 oxidized [NADPH--hemoprotein reductase] + 3 H2O + 2 H(+). The protein operates within plant hormone biosynthesis; brassinosteroid biosynthesis. In terms of biological role, catalyzes the C6-oxidation step in brassinosteroids biosynthesis. Converts 6-deoxocastasterone (6-deoxoCS) to castasterone (CS), and castasterone (CS) to brassinolide (BL). The chain is Cytochrome P450 85A3 from Solanum lycopersicum (Tomato).